Consider the following 505-residue polypeptide: RNA-splicing ligase RtcB homolog (505 aa).

Positions 119, 122, 227, 259, and 353 each coordinate Mn(2+). Asparagine 226 to glutamate 230 serves as a coordination point for GMP. GMP contacts are provided by residues histidine 353–asparagine 354, glycine 402–methionine 405, serine 409, histidine 428–glycine 431, and lysine 504. The GMP-histidine intermediate role is filled by histidine 428.

The protein belongs to the RtcB family. In terms of assembly, catalytic component of the tRNA-splicing ligase complex. Requires Mn(2+) as cofactor.

The protein resides in the nucleus. It localises to the cytoplasm. It catalyses the reaction a 3'-end 3'-phospho-ribonucleotide-RNA + a 5'-end dephospho-ribonucleoside-RNA + GTP = a ribonucleotidyl-ribonucleotide-RNA + GMP + diphosphate. The enzyme catalyses a 3'-end 2',3'-cyclophospho-ribonucleotide-RNA + a 5'-end dephospho-ribonucleoside-RNA + GTP + H2O = a ribonucleotidyl-ribonucleotide-RNA + GMP + diphosphate + H(+). Catalytic subunit of the tRNA-splicing ligase complex that acts by directly joining spliced tRNA halves to mature-sized tRNAs by incorporating the precursor-derived splice junction phosphate into the mature tRNA as a canonical 3',5'-phosphodiester. May act as an RNA ligase with broad substrate specificity, and may function toward other RNAs. The chain is RNA-splicing ligase RtcB homolog from Danio rerio (Zebrafish).